The primary structure comprises 521 residues: Tigger transposable element-derived protein 6 (521 aa).

Residues 3 to 54 enclose the HTH psq-type domain; that stretch reads NKGNKKRRQFSLEEKMKVVGAVDSGKRKGDVAKEFGITPSTLSTFLKDRTKF. 2 DNA-binding regions (H-T-H motif) span residues 30-50 and 99-130; these read KGDV…FLKD and SVIR…FRDR. Residues 66 to 137 enclose the HTH CENPB-type domain; it reads QRKRMRSALY…RDRHGIALKA (72 aa). Residues 170–372 form the DDE-1 domain; that stretch reads YSPDDIFNAD…VKPSTVVKCW (203 aa).

Belongs to the tigger transposable element derived protein family.

The protein resides in the nucleus. The sequence is that of Tigger transposable element-derived protein 6 (TIGD6) from Homo sapiens (Human).